We begin with the raw amino-acid sequence, 92 residues long: uncharacterized protein (92 aa).

One can recognise an HTH arsR-type domain in the interval 1-92 (MNGNKDAIFK…LKNLLKGWIE (92 aa)). A DNA-binding region (H-T-H motif) is located at residues 37–61 (IRLITKYDLSITRQAIAKHLSVLED).

This is an uncharacterized protein from Bacillus subtilis (strain 168).